The sequence spans 390 residues: Lipid-A-disaccharide synthase (390 aa).

This sequence belongs to the LpxB family.

It carries out the reaction a lipid X + a UDP-2-N,3-O-bis[(3R)-3-hydroxyacyl]-alpha-D-glucosamine = a lipid A disaccharide + UDP + H(+). The protein operates within bacterial outer membrane biogenesis; LPS lipid A biosynthesis. Its function is as follows. Condensation of UDP-2,3-diacylglucosamine and 2,3-diacylglucosamine-1-phosphate to form lipid A disaccharide, a precursor of lipid A, a phosphorylated glycolipid that anchors the lipopolysaccharide to the outer membrane of the cell. This is Lipid-A-disaccharide synthase from Paramagnetospirillum magneticum (strain ATCC 700264 / AMB-1) (Magnetospirillum magneticum).